The following is a 378-amino-acid chain: D-alanine--D-alanine ligase (378 aa).

Residues 149-374 (KVLLRAAGIP…FRTVVTDLIE (226 aa)) enclose the ATP-grasp domain. Position 189 to 247 (189 to 247 (EAGLQYPLFVKPSRAGSSFGVTKVEQIGDAAALAAAVFEASRHDWRVLVEQGIDAREIE)) interacts with ATP. Asp-328, Glu-341, and Asn-343 together coordinate Mg(2+).

The protein belongs to the D-alanine--D-alanine ligase family. Mg(2+) serves as cofactor. Requires Mn(2+) as cofactor.

It localises to the cytoplasm. It carries out the reaction 2 D-alanine + ATP = D-alanyl-D-alanine + ADP + phosphate + H(+). The protein operates within cell wall biogenesis; peptidoglycan biosynthesis. In terms of biological role, cell wall formation. In Bifidobacterium animalis subsp. lactis (strain AD011), this protein is D-alanine--D-alanine ligase.